The following is a 208-amino-acid chain: Small ribosomal subunit protein eS8 (208 aa).

The interval Met1–Pro40 is disordered. Over residues Trp8–Lys26 the composition is skewed to basic residues.

The protein belongs to the eukaryotic ribosomal protein eS8 family. As to quaternary structure, component of the small ribosomal subunit.

The protein localises to the cytoplasm. Its function is as follows. Component of the small ribosomal subunit. The ribosome is a large ribonucleoprotein complex responsible for the synthesis of proteins in the cell. In Ictalurus punctatus (Channel catfish), this protein is Small ribosomal subunit protein eS8 (rps8).